The chain runs to 188 residues: Elongation factor P-like protein (188 aa).

This sequence belongs to the elongation factor P family.

The polypeptide is Elongation factor P-like protein (Aliivibrio fischeri (strain MJ11) (Vibrio fischeri)).